We begin with the raw amino-acid sequence, 349 residues long: D-arabinitol dehydrogenase 1 (349 aa).

7 residues coordinate Zn(2+): C46, H67, C97, C100, C103, C111, and E151.

This sequence belongs to the zinc-containing alcohol dehydrogenase family. Zn(2+) serves as cofactor.

The protein localises to the cell projection. The catalysed reaction is D-arabinitol + NADP(+) = D-xylulose + NADPH + H(+). The enzyme catalyses D-arabinitol + NADP(+) = D-ribulose + NADPH + H(+). Functionally, D-arabinitol dehydrogenase which mostly produces D-arabinitol in haustoria, the appendages of the parasitic fungus that penetrate the host's tissue and draws nutrients from it. D-arabinitol accumulation may serve as a carbohydrate storage compound. D-arabinitol is also capable of quenching reactive oxygen species involved in host plant defense reactions, thus providing protection for the rust fungus during the pathogenic interaction. The protein is D-arabinitol dehydrogenase 1 (ARD1) of Uromyces fabae (Rust fungus).